We begin with the raw amino-acid sequence, 473 residues long: Zinc transporter SLC39A7 (473 aa).

A helical transmembrane segment spans residues 11–31 (VAVGLLTWAALGLLVAGHGGH). Basic and acidic residues-rich tracts occupy residues 44-56 (GHSHRHSHEDFHH) and 66-114 (HTHE…EHSH). The disordered stretch occupies residues 44-120 (GHSHRHSHED…EHSHGGYGES (77 aa)). At histidine 66 the chain carries Pros-methylhistidine. The next 3 helical transmembrane spans lie at 138–158 (ALGATVLISAAPFFVLFLIPV), 169–189 (LQILLSFASGGLLGDAFLHLI), and 214–234 (GPILSVGLWVLSGIVAFLVVE). Positions 243–316 (GHEHSHGHGH…QHSGEEKAGS (74 aa)) are disordered. Serine 278 and serine 279 each carry phosphoserine. Over residues 298-316 (RPKDGPVRPQHSGEEKAGS) the composition is skewed to basic and acidic residues. The helical transmembrane segment at 388–408 (LLTAVGALAGTAFALLTEGGA) threads the bilayer. Residues 428-473 (GDQAATQASPRSTSLPPVGEEDFREDPGPRQKGQQEKSGINVNCVS) are disordered. Positions 431–442 (AATQASPRSTSL) are enriched in polar residues. A compositionally biased stretch (basic and acidic residues) spans 452 to 462 (EDPGPRQKGQQ). Residues 463 to 473 (EKSGINVNCVS) show a composition bias toward polar residues.

It belongs to the ZIP transporter (TC 2.A.5) family. KE4/Catsup subfamily. Homodimer. Methylation at some His residue by METTL9 leads to reduced zinc-binding. Post-translationally, rapidly phosphorylated by CK2 following Zn(2+) treatment. This phosphorylation is required for efficient cytosolic Zn(2+) release.

It is found in the endoplasmic reticulum membrane. The protein resides in the golgi apparatus. The protein localises to the cis-Golgi network membrane. The enzyme catalyses Zn(2+)(in) = Zn(2+)(out). In terms of biological role, transports Zn(2+) from the endoplasmic reticulum (ER)/Golgi apparatus to the cytosol, playing an essential role in the regulation of cytosolic zinc levels. Acts as a gatekeeper of zinc release from intracellular stores, requiring post-translational activation by phosphorylation on residues, resulting in activation of multiple downstream pathways leading to cell growth and proliferation. Has an essential role in B cell development and is required for proper B cell receptor signaling. Plays an important role in maintaining intestinal epithelial homeostasis and skin dermis development by regulating ER function. Controls cell signaling pathways involved in glucose metabolism in skeletal muscle. Has a protective role against ER stress in different biological contexts. Mediates Zn(2+)-induced ferroptosis. This chain is Zinc transporter SLC39A7 (SLC39A7), found in Sus scrofa (Pig).